Reading from the N-terminus, the 313-residue chain is MGLQRKSLLGLKDMEKSEIESILDSTESMKEIVQRKNKKLPTLKGFSMVNLFYEPSTRTRSSFEMAGKYLGADTTNMSASASSVAKGENLIDTGKTLEAMGINLIVMRHPLAGAPRLLANNLSCSIINAGDGYHEHPTQALLDMFTIKEYKGSLKGLKVTIIGDIYHSRVARSNIWGLTKMGADVRLAGPPTLLDQRVFTEMGASCYYRVEDALADADVVMALRIQRERQGKTLLPSLREYARLYGINQERFKLAKKDALLLHPGPVNRGIELTSELMNSEKSVIEEQVTNGVAIRMALLYHLSGGEDNGDIA.

Positions 58 and 59 each coordinate carbamoyl phosphate. K86 provides a ligand contact to L-aspartate. Carbamoyl phosphate is bound by residues R108, H136, and Q139. Residues R169 and R224 each contribute to the L-aspartate site. G265 and P266 together coordinate carbamoyl phosphate.

Belongs to the aspartate/ornithine carbamoyltransferase superfamily. ATCase family. In terms of assembly, heterododecamer (2C3:3R2) of six catalytic PyrB chains organized as two trimers (C3), and six regulatory PyrI chains organized as three dimers (R2).

It carries out the reaction carbamoyl phosphate + L-aspartate = N-carbamoyl-L-aspartate + phosphate + H(+). It participates in pyrimidine metabolism; UMP biosynthesis via de novo pathway; (S)-dihydroorotate from bicarbonate: step 2/3. Its function is as follows. Catalyzes the condensation of carbamoyl phosphate and aspartate to form carbamoyl aspartate and inorganic phosphate, the committed step in the de novo pyrimidine nucleotide biosynthesis pathway. This is Aspartate carbamoyltransferase catalytic subunit from Natranaerobius thermophilus (strain ATCC BAA-1301 / DSM 18059 / JW/NM-WN-LF).